The primary structure comprises 118 residues: Probable mitochondrial pyruvate carrier 2 (118 aa).

3 consecutive transmembrane segments (helical) span residues 19 to 35 (VHFW…LSGI), 50 to 66 (YAAL…WSLI), and 72 to 94 (YFNA…RILV).

The protein belongs to the mitochondrial pyruvate carrier (MPC) (TC 2.A.105) family. As to quaternary structure, the functional 150 kDa pyruvate import complex is a heteromer of mpc1 and mpc2.

The protein localises to the mitochondrion inner membrane. Mediates the uptake of pyruvate into mitochondria. The chain is Probable mitochondrial pyruvate carrier 2 from Schizosaccharomyces pombe (strain 972 / ATCC 24843) (Fission yeast).